Consider the following 987-residue polypeptide: ATP-dependent 6-phosphofructokinase subunit alpha (987 aa).

Positions 1-580 are N-terminal catalytic PFK domain 1; sequence MQSQDSCYGV…LYENFLSTTV (580 aa). S3 is subject to Phosphoserine. K89 is covalently cross-linked (Glycyl lysine isopeptide (Lys-Gly) (interchain with G-Cter in ubiquitin)). Phosphoserine is present on residues S166, S179, S185, S189, and S192. G215 is a binding site for ATP. A Phosphoserine modification is found at S217. ATP is bound by residues 278–279 and 308–311; these read RS and GDGS. D309 contacts Mg(2+). Residues 354-356, R391, and 398-400 contribute to the beta-D-fructose 6-phosphate site; these read SID and MGR. Residue D356 is the Proton acceptor of the active site. T450 is subject to Phosphothreonine. Beta-D-fructose 6-phosphate contacts are provided by residues E455, K482, and 488–491; that span reads HVQR. An interdomain linker region spans residues 581-594; it reads KDDGSELLPVSDRL. The segment at 595-987 is C-terminal regulatory PFK domain 2; that stretch reads NIGIVHVGAP…EVAALAAENK (393 aa). A Glycyl lysine isopeptide (Lys-Gly) (interchain with G-Cter in ubiquitin) cross-link involves residue K625. Beta-D-fructose 2,6-bisphosphate is bound by residues R665, 722 to 726, R760, 767 to 769, E827, R853, 859 to 862, and R952; these read TVSNN, QGG, and HVQQ.

Belongs to the phosphofructokinase type A (PFKA) family. ATP-dependent PFK group I subfamily. Eukaryotic two domain clade 'E' sub-subfamily. In terms of assembly, heterooctamer of 4 alpha and 4 beta chains. Requires Mg(2+) as cofactor.

The protein resides in the cytoplasm. It is found in the mitochondrion outer membrane. It catalyses the reaction beta-D-fructose 6-phosphate + ATP = beta-D-fructose 1,6-bisphosphate + ADP + H(+). Its pathway is carbohydrate degradation; glycolysis; D-glyceraldehyde 3-phosphate and glycerone phosphate from D-glucose: step 3/4. With respect to regulation, allosterically activated by ADP, AMP, or fructose 2,6-bisphosphate, and allosterically inhibited by ATP or citrate. Functionally, catalyzes the phosphorylation of D-fructose 6-phosphate to fructose 1,6-bisphosphate by ATP, the first committing step of glycolysis. In Saccharomyces cerevisiae (strain ATCC 204508 / S288c) (Baker's yeast), this protein is ATP-dependent 6-phosphofructokinase subunit alpha (PFK1).